The following is a 68-amino-acid chain: Large ribosomal subunit protein bL31 (68 aa).

Zn(2+)-binding residues include Cys17, Cys19, Cys37, and Cys40.

The protein belongs to the bacterial ribosomal protein bL31 family. Type A subfamily. In terms of assembly, part of the 50S ribosomal subunit. Requires Zn(2+) as cofactor.

Its function is as follows. Binds the 23S rRNA. This Dehalococcoides mccartyi (strain CBDB1) protein is Large ribosomal subunit protein bL31.